A 557-amino-acid polypeptide reads, in one-letter code: Resveratrol cleavage oxygenase 1 (557 aa).

The tract at residues 1–46 (MAILNDPPSSTTILSLHTPDVPPPSKPTPATTSHPQDSRNPRNLTS) is disordered. Residues Tyr144 and Lys177 each contribute to the piceatannol site. Residues Tyr144 and Lys177 each coordinate trans-resveratrol. Fe cation is bound by residues His211, His262, and His334. Glu404 is a piceatannol binding site. A trans-resveratrol-binding site is contributed by Glu404. Fe cation is bound at residue His523.

It belongs to the carotenoid oxygenase family. Fe(2+) serves as cofactor.

It catalyses the reaction trans-resveratrol + O2 = 3,5-dihydroxybenzaldehyde + 4-hydroxybenzaldehyde. The enzyme catalyses piceatannol + O2 = 3,5-dihydroxybenzaldehyde + 3,4-dihydroxybenzaldehyde. Functionally, dioxygenase that cleaves the interphenyl C-alpha-C-beta double bond of resveratrol to yield 3,5-dihydroxybenzaldehyde and 4-hydroxybenzaldehyde. Also cleaves piceatannol, a compound that differs from resveratrol only in the occurrence of an additional hydroxyl group, which leads to the production of 3,4-dihydroxybenzaldehyde and 3,5-hydroxybenzaldehyde. The chain is Resveratrol cleavage oxygenase 1 from Botryotinia fuckeliana (strain B05.10) (Noble rot fungus).